We begin with the raw amino-acid sequence, 412 residues long: Cytochrome p450 CYP199A2 (412 aa).

Substrate contacts are provided by residues 94 to 97 (RPPS) and Ser-247. Cys-361 provides a ligand contact to heme.

The protein belongs to the cytochrome P450 family. As to quaternary structure, interacts with the ferredoxin-like iron-sulfur protein ThcC. Heme serves as cofactor.

Its subcellular location is the cytoplasm. The enzyme catalyses 4-methoxybenzoate + AH2 + O2 = 4-hydroxybenzoate + formaldehyde + A + H2O. Functionally, the oxidative demethylation of 4-methoxybenzoate requires the participation of the monooxygenase CYP199A2, the ferredoxin-like protein ThcC/RPA1872 and a ferredoxin reductase to mediate the transfer of electrons from NADH to CYP199A2. It is also active with 4-ethylbenzoate. This Rhodopseudomonas palustris (strain ATCC BAA-98 / CGA009) protein is Cytochrome p450 CYP199A2.